Here is a 193-residue protein sequence, read N- to C-terminus: Apoptosis-associated speck-like protein containing a CARD (193 aa).

One can recognise a Pyrin domain in the interval 1-91 (MGRARDAILD…AEQLQTTKEE (91 aa)). Residues Lys55 and Lys172 each participate in a glycyl lysine isopeptide (Lys-Gly) (interchain with G-Cter in ubiquitin) cross-link. Positions 105-193 (STARTGHFVD…PYLVMDLEQS (89 aa)) constitute a CARD domain. Phosphoserine is present on Ser193.

Self-associates; enforced oligomerization induces apoptosis, NF-kappa-B regulation and interleukin-1 beta secretion. Homooligomers can form disk-like particles of approximately 12 nm diameter and approximately 1 nm height. Component of several inflammasomes containing one pattern recognition receptor/sensor, such as NLRP2, NLRP3, NLRP6, NLRC4, AIM2, MEFV or NOD2, and probably NLRC4 or NLRP12. Major component of the ASC pyroptosome, a 1-2 um supramolecular assembly (one per macrophage cell) which consists of oligomerized PYCARD dimers and CASP1. Interacts with CASP1 (precursor form); the interaction induces activation of CASP1 leading to the processing of interleukin-1 beta; PYCARD competes with RIPK2 for binding to CASP1. Interacts with NLRP3; the interaction requires the homooligomerization of NLRP3. Interacts with NLRP2, NLRC4, MEFV, CARD16, AIM2, NOD2, RIGI, RIPK2, PYDC1, PYDC2, NLRP10, CHUK, IKBKB and BAX. Interacts with CASP8. Component of the AIM2 PANoptosome complex, a multiprotein complex that drives inflammatory cell death (PANoptosis). In terms of processing, phosphorylated. Post-translationally, 'Lys-63'-linked polyubiquitination by TRAF3 is critical for speck formation and inflammasome activation. 'Lys-63'-linked deubiquitinated by USP50; a crucial step for NLRP3-mediated inflammasome activation. 'Lys-63'-linked polyubiquitination by PELI1 is also critical for speck formation and inflammasome activation. Deubiquitinated by USP3 that cleaves 'Lys-48'-linked ubiquitin chains and strengthens its stability by blocking proteasomal degradation. Expressed in small intestine, colon, thymus, spleen, brain, heart, skeletal muscle, kidney, lung and liver.

The protein localises to the cytoplasm. It localises to the inflammasome. It is found in the endoplasmic reticulum. Its subcellular location is the mitochondrion. The protein resides in the nucleus. Its function is as follows. Functions as a key mediator in apoptosis and inflammation. Promotes caspase-mediated apoptosis involving predominantly caspase-8 and also caspase-9 in a probable cell type-specific manner. Involved in activation of the mitochondrial apoptotic pathway, promotes caspase-8-dependent proteolytic maturation of BID independently of FADD in certain cell types and also mediates mitochondrial translocation of BAX and activates BAX-dependent apoptosis coupled to activation of caspase-9, -2 and -3. Involved in innate immune response by acting as an integral adapter in the assembly of various inflammasomes (NLRP2, NLRP3, NLRP6 and AIM2) which recruit and activate caspase-1 leading to processing and secretion of pro-inflammatory cytokines. Caspase-1-dependent inflammation leads to macrophage pyroptosis, a form of cell death. The function as activating adapter in different types of inflammasomes is mediated by the pyrin and CARD domains and their homotypic interactions. Clustered PYCARD nucleates the formation of caspase-1 filaments through the interaction of their respective CARD domains, acting as a platform for of caspase-1 polymerization. In the NLRC4 inflammasomes seems not be required but facilitates the processing of procaspase-1. In cooperation with NOD2 involved in an inflammasome activated by bacterial muramyl dipeptide leading to caspase-1 activation. May be involved in RIGI-triggered pro-inflammatory responses and inflammasome activation. In collaboration with AIM2 which detects cytosolic double-stranded DNA may also be involved in a caspase-1-independent cell death that involves caspase-8. In adaptive immunity may be involved in maturation of dendritic cells to stimulate T-cell immunity and in cytoskeletal rearrangements coupled to chemotaxis and antigen uptake may be involved in post-transcriptional regulation of the guanine nucleotide exchange factor DOCK2; the latter function is proposed to involve the nuclear form. Also involved in transcriptional activation of cytokines and chemokines independent of the inflammasome; this function may involve AP-1, NF-kappa-B, MAPK and caspase-8 signaling pathways. For regulation of NF-kappa-B activating and inhibiting functions have been reported. Modulates NF-kappa-B induction at the level of the IKK complex by inhibiting kinase activity of CHUK and IKBK. Proposed to compete with RIPK2 for association with CASP1 thereby down-regulating CASP1-mediated RIPK2-dependent NF-kappa-B activation and activating interleukin-1 beta processing. Modulates host resistance to DNA virus infection, probably by inducing the cleavage of and inactivating CGAS in presence of cytoplasmic double-stranded DNA. This chain is Apoptosis-associated speck-like protein containing a CARD (Pycard), found in Mus musculus (Mouse).